Here is a 400-residue protein sequence, read N- to C-terminus: Selection and upkeep of intraepithelial T-cells protein 2 (400 aa).

Positions 1 to 21 (MGATGVLLCVVLHFLQMVTQS) are cleaved as a signal peptide. Topologically, residues 22-240 (SEKFTVTGLQ…LSGELFSWKR (219 aa)) are extracellular. Residues 23 to 133 (EKFTVTGLQR…VGEFYEEHIT (111 aa)) enclose the Ig-like V-type domain. 2 cysteine pairs are disulfide-bonded: Cys46-Cys120 and Cys160-Cys214. Residues 139 to 225 (ATSSVMYILM…LQNLLTHQEE (87 aa)) form the Ig-like C1-type domain. The N-linked (GlcNAc...) asparagine glycan is linked to Asn197. The helical transmembrane segment at 241 to 261 (VWIMILTTIGFMMIAFCMTYC) threads the bilayer. Topologically, residues 262–280 (VQQHLLYGTFSKGKCHWLK) are cytoplasmic. The helical transmembrane segment at 281–301 (STMIFMFSVIAVTGVMLILHL) threads the bilayer. Residues 302 to 321 (KQRVPVSDQHFELDTLWLED) lie on the Extracellular side of the membrane. The helical transmembrane segment at 322-342 (ISVILCVLIVFIIKLISFIYF) threads the bilayer. Residues 343–400 (RLEGDHQGWSLPPYLSATPTAAICRLAVPEYSRGHLQLDSEDDLAGMGPSPFFITPCF) are Cytoplasmic-facing.

It belongs to the SKINT family. In terms of tissue distribution, expressed in skin, thymus and mammary gland.

Its subcellular location is the membrane. In terms of biological role, may act by engaging a cell surface molecule on immature T-cells in the embryonic thymus. This is Selection and upkeep of intraepithelial T-cells protein 2 (Skint2) from Mus musculus (Mouse).